Here is a 2188-residue protein sequence, read N- to C-terminus: Phenolphthiocerol/phthiocerol polyketide synthase subunit C (2188 aa).

The Ketosynthase family 3 (KS3) domain maps to 34-462 (SEPIAVIGMG…GTNAHVVIEQ (429 aa)). Catalysis depends on for beta-ketoacyl synthase activity residues Cys210, His345, and His384. Residues 572 to 890 (VFVYSGRGSQ…NLNTTHTTHP (319 aa)) are acyltransferase. Catalysis depends on Ser660, which acts as the For malonyltransferase activity. The tract at residues 928 to 1050 (HPLLGVGVTD…ATVARAEPLA (123 aa)) is N-terminal hotdog fold. The dehydratase stretch occupies residues 928 to 1093 (HPLLGVGVTD…QQHGPAFQGI (166 aa)). The region spanning 928–1223 (HPLLGVGVTD…MAVLGSGSGA (296 aa)) is the PKS/mFAS DH domain. The active-site Proton acceptor; for dehydratase activity is His959. The tract at residues 1067-1223 (EDQLDPDDLY…MAVLGSGSGA (157 aa)) is C-terminal hotdog fold. Asp1129 serves as the catalytic Proton donor; for dehydratase activity. Residues 1467–1778 (GRLDALNVHE…SGKHTGKIVI (312 aa)) form an enoylreductase region. The tract at residues 1802 to 1981 (GGYLIVGGMG…GINWGPWADV (180 aa)) is beta-ketoacyl reductase. 1803–1848 (GYLIVGGMGGLGFVVARWLAEQGAGLIVLNGRSAPSDEVAAAIAEL) contacts NADP(+). In terms of domain architecture, Carrier spans 2069–2145 (ERPGHLASAI…DLATALCERM (77 aa)). An O-(pantetheine 4'-phosphoryl)serine modification is found at Ser2105.

In terms of assembly, homodimer. It depends on NADP(+) as a cofactor. Pantetheine 4'-phosphate serves as cofactor.

It carries out the reaction icosanoyl-[(phenol)carboxyphthiodiolenone synthase] + 2 (S)-methylmalonyl-CoA + 3 malonyl-CoA + 5 NADPH + 10 H(+) = C32-carboxyphthiodiolenone-[(phenol)carboxyphthiodiolenone synthase] + 5 CO2 + 5 NADP(+) + 5 CoA + 2 H2O. It catalyses the reaction docosanoyl-[(phenol)carboxyphthiodiolenone synthase] + 2 (S)-methylmalonyl-CoA + 3 malonyl-CoA + 5 NADPH + 10 H(+) = C34-carboxyphthiodiolenone-[(phenol)carboxyphthiodiolenone synthase] + 5 CO2 + 5 NADP(+) + 5 CoA + 2 H2O. The catalysed reaction is 17-(4-hydroxyphenyl)heptadecanoyl-[(phenol)carboxyphthiodiolenone synthase] + 2 (S)-methylmalonyl-CoA + 3 malonyl-CoA + 5 NADPH + 10 H(+) = C35-(phenol)carboxyphthiodiolenone-[(phenol)carboxyphthiodiolenone synthase] + 5 CO2 + 5 NADP(+) + 5 CoA + 2 H2O. The enzyme catalyses 19-(4-hydroxyphenyl)nonadecanoyl-[(phenol)carboxyphthiodiolenone synthase] + 2 (S)-methylmalonyl-CoA + 3 malonyl-CoA + 5 NADPH + 10 H(+) = C37-(phenol)carboxyphthiodiolenone-[(phenol)carboxyphthiodiolenone synthase] + 5 CO2 + 5 NADP(+) + 5 CoA + 2 H2O. The protein operates within lipid metabolism; fatty acid biosynthesis. Functionally, part of the PpsABCDE complex involved in the biosynthesis of the lipid core common to phthiocerols and phenolphthiocerols by successive additions of malonyl-CoA or methylmalonyl-CoA extender units. PpsA can accept as substrate the activated forms of either icosanoyl (C20), docosanoyl (C22) or lignoceroyl (C24) groups from FadD26, or a (4-hydroxyphenyl)-C17 or (4-hydroxyphenyl)-C19 fatty acyl from FadD29. PpsA initiates the biosynthesis and extends its substrate using a malonyl-CoA extender unit. The PpsB and PpsC proteins add the second and third malonyl-CoA extender units. PpsD adds an (R)-methylmalonyl unit and PpsE adds a second (R)-methylmalonyl unit. The incorporation of the methylmalonyl units results in formation of two branched methyl groups in the elongated product. This chain is Phenolphthiocerol/phthiocerol polyketide synthase subunit C (ppsC), found in Mycobacterium bovis (strain ATCC BAA-935 / AF2122/97).